The primary structure comprises 98 residues: MIPTYMNIMLAFTISLLGMLTYRSHLVASLLCLEGMMMSLFIMATLIASNTHFPLINIMPIILLVFAACEAAVGLALLISISNTYGLDYIHNLNLLQC.

3 helical membrane passes run 1 to 21, 27 to 47, and 61 to 81; these read MIPT…GMLT, VASL…ATLI, and IILL…LISI.

It belongs to the complex I subunit 4L family. In terms of assembly, core subunit of respiratory chain NADH dehydrogenase (Complex I) which is composed of 45 different subunits.

It is found in the mitochondrion inner membrane. The catalysed reaction is a ubiquinone + NADH + 5 H(+)(in) = a ubiquinol + NAD(+) + 4 H(+)(out). Core subunit of the mitochondrial membrane respiratory chain NADH dehydrogenase (Complex I) which catalyzes electron transfer from NADH through the respiratory chain, using ubiquinone as an electron acceptor. Part of the enzyme membrane arm which is embedded in the lipid bilayer and involved in proton translocation. In Macaca hecki (Heck's macaque), this protein is NADH-ubiquinone oxidoreductase chain 4L (MT-ND4L).